Here is a 211-residue protein sequence, read N- to C-terminus: Histidine biosynthesis bifunctional protein HisIE (211 aa).

Residues 1–122 form a phosphoribosyl-AMP cyclohydrolase region; that stretch reads MSFKAAEVSS…DAQEESQMVW (122 aa). A phosphoribosyl-ATP pyrophosphohydrolase region spans residues 123 to 211; it reads LHQLEQLLAA…VVNKLKERHK (89 aa).

This sequence in the N-terminal section; belongs to the PRA-CH family. In the C-terminal section; belongs to the PRA-PH family.

The protein resides in the cytoplasm. The catalysed reaction is 1-(5-phospho-beta-D-ribosyl)-ATP + H2O = 1-(5-phospho-beta-D-ribosyl)-5'-AMP + diphosphate + H(+). The enzyme catalyses 1-(5-phospho-beta-D-ribosyl)-5'-AMP + H2O = 1-(5-phospho-beta-D-ribosyl)-5-[(5-phospho-beta-D-ribosylamino)methylideneamino]imidazole-4-carboxamide. The protein operates within amino-acid biosynthesis; L-histidine biosynthesis; L-histidine from 5-phospho-alpha-D-ribose 1-diphosphate: step 2/9. It participates in amino-acid biosynthesis; L-histidine biosynthesis; L-histidine from 5-phospho-alpha-D-ribose 1-diphosphate: step 3/9. This Vibrio parahaemolyticus serotype O3:K6 (strain RIMD 2210633) protein is Histidine biosynthesis bifunctional protein HisIE.